The chain runs to 706 residues: Protein MAM3 (706 aa).

At 1 to 16 the chain is on the vacuolar side; sequence MSFLPLRSRSRSGAPH. A helical membrane pass occupies residues 17 to 37; it reads WVYIILYHIFTIPKIYSLPLL. The Cytoplasmic segment spans residues 38 to 65; it reads SGSHVLNSRDVADSGHSVGDEASVTTYY. Residues 57-240 enclose the CNNM transmembrane domain; sequence DEASVTTYYI…MGVERLTKDE (184 aa). Residues 66–86 traverse the membrane as a helical segment; sequence IISIILVLLGGVFAGLTLGLM. Topologically, residues 87–120 are vacuolar; that stretch reads GQDEVYLKVISTSGSNSEKKLAKRVLDLISRGKH. The chain crosses the membrane as a helical span at residues 121 to 141; it reads WVLVTLLLSNVITNETLPIVL. The Cytoplasmic portion of the chain corresponds to 142–145; it reads DRCL. Residues 146-166 traverse the membrane as a helical segment; the sequence is GGGWQAVVSSTILIVIFGEII. The Vacuolar portion of the chain corresponds to 167-177; sequence PQSVCVKYGLQ. The helical transmembrane segment at 178–198 threads the bilayer; that stretch reads VGAFFCPFVLVLMYLMYPVAY. Residues 199-706 are Cytoplasmic-facing; that stretch reads PIATLLDYML…ANGSSSTIKR (508 aa). CBS domains are found at residues 259-320 and 321-386; these read MTPI…DCLP and ISHF…IVDE. Disordered regions lie at residues 421-495, 515-540, and 557-597; these read SHKE…ASNP, ITTH…LSAE, and LHTQ…ENQN. Residues 433 to 445 are compositionally biased toward low complexity; the sequence is ESSPLLSPSNSNH. Phosphoserine is present on residues Ser-439 and Ser-447. Over residues 472-495 the composition is skewed to polar residues; sequence AVLSPTPQVTEHGTIIPSNLASNP. Phosphoserine is present on Ser-527. Residues 566-575 are compositionally biased toward low complexity; the sequence is TQVTTSTKTT. Polar residues predominate over residues 576–597; that stretch reads RNSPDSISIPNSGANHGNENQN. At Ser-603 the chain carries Phosphoserine. Phosphotyrosine is present on Tyr-604. At Thr-607 the chain carries Phosphothreonine. A Phosphoserine modification is found at Ser-614. The segment at 626–706 is disordered; the sequence is IGPAKDWDES…ANGSSSTIKR (81 aa). A compositionally biased stretch (basic and acidic residues) spans 630–639; the sequence is KDWDESKSEY. Positions 658 to 680 are enriched in low complexity; it reads SSSNASLFSSIKNKFKNENANNN. Residues 681 to 706 are compositionally biased toward polar residues; sequence DRSNFTDSLSRTSNYDANGSSSTIKR.

This sequence belongs to the ACDP family.

It is found in the vacuole membrane. In terms of biological role, involved in metal homeostasis and more specially in manganese sensitivity. This Saccharomyces cerevisiae (strain ATCC 204508 / S288c) (Baker's yeast) protein is Protein MAM3 (MAM3).